A 362-amino-acid chain; its full sequence is NAD(P)H-quinone oxidoreductase subunit 1, chloroplastic (362 aa).

Helical transmembrane passes span 29 to 49, 103 to 123, 128 to 148, 164 to 184, 202 to 222, 247 to 267, 303 to 323, and 335 to 355; these read ILPI…IVWL, IAVI…HFVL, IGVF…LMAG, AAQS…ISLL, FFGW…ISSL, YSGI…LVSS, TMGI…SITI, and LLNL…LLTT.

The protein belongs to the complex I subunit 1 family. NDH is composed of at least 16 different subunits, 5 of which are encoded in the nucleus.

Its subcellular location is the plastid. The protein resides in the chloroplast thylakoid membrane. The catalysed reaction is a plastoquinone + NADH + (n+1) H(+)(in) = a plastoquinol + NAD(+) + n H(+)(out). The enzyme catalyses a plastoquinone + NADPH + (n+1) H(+)(in) = a plastoquinol + NADP(+) + n H(+)(out). In terms of biological role, NDH shuttles electrons from NAD(P)H:plastoquinone, via FMN and iron-sulfur (Fe-S) centers, to quinones in the photosynthetic chain and possibly in a chloroplast respiratory chain. The immediate electron acceptor for the enzyme in this species is believed to be plastoquinone. Couples the redox reaction to proton translocation, and thus conserves the redox energy in a proton gradient. This chain is NAD(P)H-quinone oxidoreductase subunit 1, chloroplastic, found in Triticum aestivum (Wheat).